A 309-amino-acid chain; its full sequence is Homoserine O-succinyltransferase (309 aa).

The active-site Acyl-thioester intermediate is cysteine 142. Lysine 163 and serine 192 together coordinate substrate. Catalysis depends on histidine 235, which acts as the Proton acceptor. Glutamate 237 is an active-site residue. A substrate-binding site is contributed by arginine 249.

This sequence belongs to the MetA family.

It localises to the cytoplasm. It carries out the reaction L-homoserine + succinyl-CoA = O-succinyl-L-homoserine + CoA. Its pathway is amino-acid biosynthesis; L-methionine biosynthesis via de novo pathway; O-succinyl-L-homoserine from L-homoserine: step 1/1. Functionally, transfers a succinyl group from succinyl-CoA to L-homoserine, forming succinyl-L-homoserine. In Edwardsiella ictaluri (strain 93-146), this protein is Homoserine O-succinyltransferase.